Reading from the N-terminus, the 308-residue chain is Acetaldehyde dehydrogenase (308 aa).

NAD(+) is bound at residue 14 to 17 (TGNI). Catalysis depends on Cys129, which acts as the Acyl-thioester intermediate. Residues 160–168 (SAGPGTRQN) and Asn280 each bind NAD(+).

This sequence belongs to the acetaldehyde dehydrogenase family.

It carries out the reaction acetaldehyde + NAD(+) + CoA = acetyl-CoA + NADH + H(+). This is Acetaldehyde dehydrogenase from Thermomicrobium roseum (strain ATCC 27502 / DSM 5159 / P-2).